The primary structure comprises 146 residues: Large-conductance mechanosensitive channel (146 aa).

3 helical membrane-spanning segments follow: residues 17 to 37 (IDLA…DSLV), 40 to 60 (IIMP…QKFV), and 89 to 109 (LTIL…VKLI).

The protein belongs to the MscL family. In terms of assembly, homopentamer.

It localises to the cell inner membrane. Functionally, channel that opens in response to stretch forces in the membrane lipid bilayer. May participate in the regulation of osmotic pressure changes within the cell. The sequence is that of Large-conductance mechanosensitive channel from Acinetobacter baylyi (strain ATCC 33305 / BD413 / ADP1).